Consider the following 507-residue polypeptide: MCTKTIPVLWGCFLLWNLYVSSSQTIYPGIKARITQRALDYGVQAGMKMIEQMLKEKKLPDLSGSESLEFLKVDYVNYNFSNIKISAFSFPNTSLAFVPGVGIKALTNHGTANISTDWGFESPLFQDTGGADLFLSGVYFTGIIILTRNDFGHPTLKLQDCYAQLSHAHVSFSGELSVLYNSFAEPMEKPILKNLNEMLCPIIASEVKALNANLSTLEVLTKIDNYTLLDYSLISSPEITENYLDLNLKGVFYPLENLTDPPFSPVPFVLPERSNSMLYIGIAEYFFKSASFAHFTAGVFNVTLSTEEISNHFVQNSQGLGNVLSRIAEIYILSQPFMVRIMATEPPIINLQPGNFTLDIPASIMMLTQPKNSTVETIVSMDFVASTSVGLVILGQRLVCSLSLNRFRLALPESNRSNIEVLRFENILSSILHFGVLPLANAKLQQGFPLSNPHKFLFVNSDIEVLEGFLLISTDLKYETSSKQQPSFHVWEGLNLISRQWRGKSAP.

The N-terminal stretch at 1-23 is a signal peptide; the sequence is MCTKTIPVLWGCFLLWNLYVSSS. N-linked (GlcNAc...) asparagine glycans are attached at residues N79, N92, and N113. An intrachain disulfide couples C161 to C200. Residues N213, N225, N257, N301, N355, N372, and N415 are each glycosylated (N-linked (GlcNAc...) asparagine).

It belongs to the BPI/LBP/Plunc superfamily. BPI/LBP family. As to expression, detected in the basal layer of the epidermis from inflammatory skin from psoriasis patients, but not in normal skin.

Its subcellular location is the secreted. This is BPI fold-containing family C protein (BPIFC) from Homo sapiens (Human).